Consider the following 120-residue polypeptide: uncharacterized protein (120 aa).

The segment at 79–120 (TGNEIPPEPEQEVVASPVTEQKKAEPSAPPKGSKKKKRGKKK) is disordered. Over residues 110-120 (GSKKKKRGKKK) the composition is skewed to basic residues.

This is an uncharacterized protein from Schizosaccharomyces pombe (strain 972 / ATCC 24843) (Fission yeast).